Reading from the N-terminus, the 121-residue chain is MSTYAIIDLGGKQLRVEPGRFYDAHLFSSFKSLLSESNTKIIIFRVLMISHGTEVQFGYPWLKNASVKARILHKKQNDKMLIYKMRSKKKTRKKFGHRQKIARFIVDAIQYNGQTFTTNLK.

It belongs to the bacterial ribosomal protein bL21 family. Part of the 50S ribosomal subunit.

It is found in the plastid. The protein resides in the chloroplast. Functionally, this protein binds to 23S rRNA. The protein is Large ribosomal subunit protein bL21c of Chaetosphaeridium globosum (Charophycean green alga).